The sequence spans 463 residues: A-type ATP synthase subunit B (463 aa).

It belongs to the ATPase alpha/beta chains family. In terms of assembly, has multiple subunits with at least A(3), B(3), C, D, E, F, H, I and proteolipid K(x).

It is found in the cell membrane. Its function is as follows. Component of the A-type ATP synthase that produces ATP from ADP in the presence of a proton gradient across the membrane. The B chain is a regulatory subunit. This Thermococcus gammatolerans (strain DSM 15229 / JCM 11827 / EJ3) protein is A-type ATP synthase subunit B.